A 408-amino-acid polypeptide reads, in one-letter code: UPF0761 membrane protein NMCC_0461 (408 aa).

The next 6 helical transmembrane spans lie at 43 to 63, 100 to 120, 139 to 159, 176 to 196, 210 to 230, and 248 to 268; these read LLAL…FPVF, LTAI…RTID, FLVY…GISF, WSGA…LWGL, AFVG…LFTW, and VPFF…GAVL.

It belongs to the UPF0761 family.

It localises to the cell inner membrane. The sequence is that of UPF0761 membrane protein NMCC_0461 from Neisseria meningitidis serogroup C (strain 053442).